The sequence spans 201 residues: uncharacterized protein (201 aa).

The protein belongs to the methyltransferase superfamily.

This is an uncharacterized protein from Bacillus subtilis (strain 168).